We begin with the raw amino-acid sequence, 462 residues long: 3-isopropylmalate dehydratase large subunit (462 aa).

Positions 337, 397, and 400 each coordinate [4Fe-4S] cluster.

This sequence belongs to the aconitase/IPM isomerase family. LeuC type 1 subfamily. As to quaternary structure, heterodimer of LeuC and LeuD. [4Fe-4S] cluster is required as a cofactor.

It carries out the reaction (2R,3S)-3-isopropylmalate = (2S)-2-isopropylmalate. It functions in the pathway amino-acid biosynthesis; L-leucine biosynthesis; L-leucine from 3-methyl-2-oxobutanoate: step 2/4. In terms of biological role, catalyzes the isomerization between 2-isopropylmalate and 3-isopropylmalate, via the formation of 2-isopropylmaleate. This chain is 3-isopropylmalate dehydratase large subunit, found in Listeria welshimeri serovar 6b (strain ATCC 35897 / DSM 20650 / CCUG 15529 / CIP 8149 / NCTC 11857 / SLCC 5334 / V8).